A 137-amino-acid chain; its full sequence is Large ribosomal subunit protein uL16 (137 aa).

It belongs to the universal ribosomal protein uL16 family. Part of the 50S ribosomal subunit.

Functionally, binds 23S rRNA and is also seen to make contacts with the A and possibly P site tRNAs. In Oleidesulfovibrio alaskensis (strain ATCC BAA-1058 / DSM 17464 / G20) (Desulfovibrio alaskensis), this protein is Large ribosomal subunit protein uL16.